Consider the following 406-residue polypeptide: Probable 26S proteasome regulatory subunit 10B (406 aa).

Residue 191–198 (GPPGTGKT) participates in ATP binding.

Belongs to the AAA ATPase family.

The protein resides in the cytoplasm. Its subcellular location is the nucleus. In terms of biological role, the 26S proteasome is involved in the ATP-dependent degradation of ubiquitinated proteins. The regulatory (or ATPase) complex confers ATP dependency and substrate specificity to the 26S complex. The chain is Probable 26S proteasome regulatory subunit 10B (rpt-4) from Caenorhabditis elegans.